A 21-amino-acid chain; its full sequence is Mast cell protease 3 (21 aa).

The Peptidase S1 domain maps to 1 to 21 (IIGGVESRPHSRPYMATLEIT). The disordered stretch occupies residues 1 to 21 (IIGGVESRPHSRPYMATLEIT).

Belongs to the peptidase S1 family. Granzyme subfamily.

Thrombin inactivating protease. Displays chymotrypsin-like substrate specificity. This Mus musculus (Mouse) protein is Mast cell protease 3 (Mcpt3).